The following is a 189-amino-acid chain: Ras-like protein rasG (189 aa).

10–17 (GGGGVGKS) contributes to the GTP binding site. The Effector region motif lies at 32–40 (YDPTIEDSY). GTP contacts are provided by residues 57–61 (DTAGQ) and 116–119 (NKCD). Residues 169-189 (KGDSKPEKGKKKRPLKACTLL) form a disordered region. Cys-186 bears the Cysteine methyl ester mark. The S-geranylgeranyl cysteine moiety is linked to residue Cys-186. Positions 187–189 (TLL) are cleaved as a propeptide — removed in mature form.

Belongs to the small GTPase superfamily. Ras family. Interacts with ripA.

The protein resides in the cell membrane. The catalysed reaction is GTP + H2O = GDP + phosphate + H(+). With respect to regulation, alternates between an inactive form bound to GDP and an active form bound to GTP. Activated by a guanine nucleotide-exchange factor (GEF) and inactivated by a GTPase-activating protein (GAP). Its function is as follows. Ras proteins bind GDP/GTP and possess intrinsic GTPase activity. The sequence is that of Ras-like protein rasG (rasG) from Dictyostelium discoideum (Social amoeba).